We begin with the raw amino-acid sequence, 852 residues long: Protein SEY1 (852 aa).

Residues 1–738 (MNGHFAAIGN…KRSAIGGITQ (738 aa)) are Cytoplasmic-facing. The GB1/RHD3-type G domain occupies 47 to 294 (GFNYHLISVF…IPADGLSVYA (248 aa)). Residue 57–64 (GSQSTGKS) coordinates GTP. Residues 475-500 (QYKLFEKELDEVSARLRKEEMRRLAI) adopt a coiled-coil conformation. The helical transmembrane segment at 739-759 (VPLYFYVILLILGWNEILMVL) threads the bilayer. At 760 to 762 (RNP) the chain is on the lumenal side. The chain crosses the membrane as a helical span at residues 763–783 (FLILLILVMGGGTYIAYSLNL). Over 784 to 852 (LGPMMQMSNA…AQDISDDDDI (69 aa)) the chain is Cytoplasmic.

It belongs to the TRAFAC class dynamin-like GTPase superfamily. GB1/RHD3 GTPase family. RHD3 subfamily.

It localises to the endoplasmic reticulum membrane. Its function is as follows. Cooperates with the reticulon proteins and tubule-shaping DP1 family proteins to generate and maintain the structure of the tubular endoplasmic reticulum network. Has GTPase activity, which is required for its function in ER organization. In Podospora anserina (strain S / ATCC MYA-4624 / DSM 980 / FGSC 10383) (Pleurage anserina), this protein is Protein SEY1.